A 468-amino-acid chain; its full sequence is Nicotinamide phosphoribosyltransferase (468 aa).

Arg180 is a diphosphate binding site. Asp203 serves as a coordination point for beta-nicotinamide D-ribonucleotide. Diphosphate contacts are provided by His229 and Arg293. Phosphohistidine; by autocatalysis is present on His229. Asp335 and Arg373 together coordinate beta-nicotinamide D-ribonucleotide.

This sequence belongs to the NAPRTase family. Homodimer. The dimeric structure consists of two protomers arranged head to tail, with domain A on one protomer interacting with domain B on the other protomer. In terms of processing, phosphorylation at His-229 plays a crucial role in enhancing the substrate affinity and is important for maintaining enzymatic activity.

The catalysed reaction is beta-nicotinamide D-ribonucleotide + diphosphate = 5-phospho-alpha-D-ribose 1-diphosphate + nicotinamide + H(+). It participates in cofactor biosynthesis; NAD(+) biosynthesis; nicotinamide D-ribonucleotide from 5-phospho-alpha-D-ribose 1-diphosphate and nicotinamide: step 1/1. Its activity is regulated as follows. ATP-dependent autophosphorylation plays a vital role in nicotinamide binding and enzyme activation. Activity is inhibited by FK866. Functionally, catalyzes the condensation of nicotinamide with 5-phosphoribosyl-1-pyrophosphate to yield nicotinamide mononucleotide, an intermediate in the biosynthesis of NAD. Plays an important role in the biosynthesis of NAD via the nicotinamide (NAM) salvage pathway. Is also capable of hydrolyzing ATP and shows ATP-dependent autophosphorylation activity. In Xanthomonas campestris pv. campestris (strain 8004), this protein is Nicotinamide phosphoribosyltransferase.